A 406-amino-acid chain; its full sequence is Argininosuccinate synthase (406 aa).

Residues 14–22 (AYSGGLDTS) and Ala-41 contribute to the ATP site. L-citrulline contacts are provided by Tyr-92 and Ser-97. Gly-122 lines the ATP pocket. The L-aspartate site is built by Thr-124, Asn-128, and Asp-129. Asn-128 is an L-citrulline binding site. 5 residues coordinate L-citrulline: Arg-132, Ser-181, Ser-190, Glu-266, and Tyr-278.

Belongs to the argininosuccinate synthase family. Type 1 subfamily. As to quaternary structure, homotetramer.

Its subcellular location is the cytoplasm. It carries out the reaction L-citrulline + L-aspartate + ATP = 2-(N(omega)-L-arginino)succinate + AMP + diphosphate + H(+). Its pathway is amino-acid biosynthesis; L-arginine biosynthesis; L-arginine from L-ornithine and carbamoyl phosphate: step 2/3. In Geobacter sulfurreducens (strain ATCC 51573 / DSM 12127 / PCA), this protein is Argininosuccinate synthase.